The following is a 190-amino-acid chain: Myophilin (190 aa).

The disordered stretch occupies residues 1 to 23 (MSNVPPPSGLSYQVKKKLEGKRD). The Calponin-homology (CH) domain maps to 24 to 130 (KDQENEALEW…RTLFALGRTC (107 aa)). One copy of the Calponin-like repeat lies at 165-189 (VSLQYGSNKGASQAGINMGKQRMIM).

Belongs to the calponin family. As to expression, muscle specific.

The polypeptide is Myophilin (Echinococcus granulosus (Hydatid tapeworm)).